The chain runs to 927 residues: Bifunctional glutamine synthetase adenylyltransferase/adenylyl-removing enzyme (927 aa).

The interval 1 to 428 is adenylyl removase; the sequence is MTMTDASDLL…AQFDQVFADK (428 aa). The adenylyl transferase stretch occupies residues 438–927; sequence DQAAGCIWSG…AALWARVFGA (490 aa).

The protein belongs to the GlnE family. Requires Mg(2+) as cofactor.

The enzyme catalyses [glutamine synthetase]-O(4)-(5'-adenylyl)-L-tyrosine + phosphate = [glutamine synthetase]-L-tyrosine + ADP. It catalyses the reaction [glutamine synthetase]-L-tyrosine + ATP = [glutamine synthetase]-O(4)-(5'-adenylyl)-L-tyrosine + diphosphate. Involved in the regulation of glutamine synthetase GlnA, a key enzyme in the process to assimilate ammonia. When cellular nitrogen levels are high, the C-terminal adenylyl transferase (AT) inactivates GlnA by covalent transfer of an adenylyl group from ATP to specific tyrosine residue of GlnA, thus reducing its activity. Conversely, when nitrogen levels are low, the N-terminal adenylyl removase (AR) activates GlnA by removing the adenylyl group by phosphorolysis, increasing its activity. The regulatory region of GlnE binds the signal transduction protein PII (GlnB) which indicates the nitrogen status of the cell. The sequence is that of Bifunctional glutamine synthetase adenylyltransferase/adenylyl-removing enzyme from Burkholderia pseudomallei (strain K96243).